The following is a 220-amino-acid chain: NAD(P)H-quinone oxidoreductase subunit M, chloroplastic (220 aa).

The N-terminal 37 residues, 1 to 37 (MATTASPFLSPAKLSLERRLPRATWTARRSVRFPPVR), are a transit peptide targeting the chloroplast. The segment at 20–91 (LPRATWTARR…PVQPLAESKN (72 aa)) is disordered. Positions 34-44 (PPVRAQDQQQQ) are enriched in low complexity.

Belongs to the NDH complex subunit M family. In terms of assembly, part of the chloroplast NDH complex, composed of a mixture of chloroplast and nucleus encoded subunits. Component of the NDH subcomplex A, at least composed of ndhH, ndhI, ndhJ, ndhK, ndhL, ndhM, ndhN and ndhO.

The protein localises to the plastid. It localises to the chloroplast thylakoid membrane. It catalyses the reaction a plastoquinone + NADH + (n+1) H(+)(in) = a plastoquinol + NAD(+) + n H(+)(out). It carries out the reaction a plastoquinone + NADPH + (n+1) H(+)(in) = a plastoquinol + NADP(+) + n H(+)(out). In terms of biological role, NDH shuttles electrons from NAD(P)H:plastoquinone, via FMN and iron-sulfur (Fe-S) centers, to quinones in the photosynthetic chain and possibly in a chloroplast respiratory chain. The immediate electron acceptor for the enzyme in this species is believed to be plastoquinone. Couples the redox reaction to proton translocation, and thus conserves the redox energy in a proton gradient. The protein is NAD(P)H-quinone oxidoreductase subunit M, chloroplastic of Oryza sativa subsp. indica (Rice).